The primary structure comprises 1681 residues: Probable clathrin heavy chain 1 (1681 aa).

7 WD40-like repeat regions span residues 22-65, 66-105, 106-147, 148-193, 194-255, 256-299, and 300-328; these read NITF…RPIS, ADSV…NVED, VVYW…QSLA, GTQI…QPIE, GHAA…ADTA, GDFP…ISTD, and TVFV…VSID. CHCR repeat units follow at residues 539-685, 688-830, 835-974, 981-1126, 1130-1271, 1276-1422, and 1425-1568; these read SENG…QVVV, ASKY…SEDA, IINT…QLID, LSET…VKEA, FIKA…FRLA, LHIV…LLLN, and LTVL…YDCF. Basic and acidic residues predominate over residues 1616 to 1628; the sequence is ERSEHERKEEKAE. Positions 1616 to 1635 are disordered; it reads ERSEHERKEEKAEQQQNNGM.

The protein belongs to the clathrin heavy chain family. As to quaternary structure, clathrin triskelions, composed of 3 heavy chains and 3 light chains, are the basic subunits of the clathrin coat. May interact with beta arrestin arr-1.

It is found in the cytoplasmic vesicle membrane. The protein resides in the membrane. The protein localises to the coated pit. Its function is as follows. Clathrin is the major protein of the polyhedral coat of coated pits and vesicles. May play a role in yolk protein clatherin-mediated endocytosis by oocytes during oogenesis. The protein is Probable clathrin heavy chain 1 (chc-1) of Caenorhabditis elegans.